Reading from the N-terminus, the 185-residue chain is HTH-type transcriptional regulator Hpr (185 aa).

The HTH marR-type domain maps to 13–157 (AMIFSQRIAQ…LIAILRNIYG (145 aa)). The segment at residues 63–86 (ISEIAKFGVMHVSTAFNFSKKLEE) is a DNA-binding region (H-T-H motif).

In terms of assembly, homodimer.

Negative regulator of protease production and sporulation. The protein is HTH-type transcriptional regulator Hpr of Bacillus cereus (strain G9842).